The sequence spans 159 residues: Phospholipase A2 AP-PLA2-I (159 aa).

The first 19 residues, 1-19 (MNFLVVIVTTVSLAGAASA), serve as a signal peptide directing secretion. The propeptide occupies 20–23 (GEIQ). Cystine bridges form between Cys-51/Cys-159, Cys-53/Cys-69, Cys-68/Cys-139, Cys-75/Cys-132, Cys-85/Cys-125, and Cys-110/Cys-130. Residues Tyr-52, Gly-54, and Gly-56 each coordinate Ca(2+). His-72 is a catalytic residue. A Ca(2+)-binding site is contributed by Asp-73. The active site involves Asp-133.

It belongs to the phospholipase A2 family. Group I subfamily. Homodimer. Requires Ca(2+) as cofactor. As to expression, expressed by the venom gland.

The protein localises to the secreted. It carries out the reaction a 1,2-diacyl-sn-glycero-3-phosphocholine + H2O = a 1-acyl-sn-glycero-3-phosphocholine + a fatty acid + H(+). Functionally, starfish phospholipase A2 (PLA2) that has hemorrhagic and capillary permeability-increasing activities and hence is considered to be deeply involved in the local inflammation. Shows hemolytic activity only in the presence of phosphatidylcholine (PC). PLA2 catalyzes the calcium-dependent hydrolysis of the 2-acyl groups in 3-sn-phosphoglycerides. This Acanthaster planci (Crown-of-thorns starfish) protein is Phospholipase A2 AP-PLA2-I.